We begin with the raw amino-acid sequence, 214 residues long: Adenylate kinase (214 aa).

10-15 (GAGKGT) contacts ATP. An NMP region spans residues 30 to 59 (STGDMLRAAIKEGTPLGLEAKKVMDAGQLI). AMP is bound by residues threonine 31, arginine 36, 57–59 (QLI), 85–88 (GFPR), and glutamine 92. The interval 122–159 (GRRVHPGSGRVYHVVYNPPKVADKDNETGEELIIRADD) is LID. ATP-binding positions include arginine 123 and 132 to 133 (VY). Residues arginine 156 and arginine 167 each coordinate AMP. Glutamine 200 lines the ATP pocket.

This sequence belongs to the adenylate kinase family. In terms of assembly, monomer.

The protein localises to the cytoplasm. The catalysed reaction is AMP + ATP = 2 ADP. Its pathway is purine metabolism; AMP biosynthesis via salvage pathway; AMP from ADP: step 1/1. In terms of biological role, catalyzes the reversible transfer of the terminal phosphate group between ATP and AMP. Plays an important role in cellular energy homeostasis and in adenine nucleotide metabolism. This Pseudoalteromonas translucida (strain TAC 125) protein is Adenylate kinase.